A 382-amino-acid polypeptide reads, in one-letter code: Lipoyl synthase, mitochondrial (382 aa).

The transit peptide at 1–30 (MHGRRHLAASLARALTYAPSRSISSTPSLL) directs the protein to the mitochondrion. Residues 25 to 34 (STPSLLQTLD) are compositionally biased toward polar residues. The interval 25-46 (STPSLLQTLDPSTPSPAAAPPT) is disordered. Residues cysteine 112, cysteine 117, cysteine 123, cysteine 143, cysteine 147, cysteine 150, and serine 359 each contribute to the [4Fe-4S] cluster site. The Radical SAM core domain occupies 128–348 (ETGTATATIM…RSLGVDMGFR (221 aa)).

It belongs to the radical SAM superfamily. Lipoyl synthase family. [4Fe-4S] cluster serves as cofactor.

It is found in the mitochondrion. It carries out the reaction [[Fe-S] cluster scaffold protein carrying a second [4Fe-4S](2+) cluster] + N(6)-octanoyl-L-lysyl-[protein] + 2 oxidized [2Fe-2S]-[ferredoxin] + 2 S-adenosyl-L-methionine + 4 H(+) = [[Fe-S] cluster scaffold protein] + N(6)-[(R)-dihydrolipoyl]-L-lysyl-[protein] + 4 Fe(3+) + 2 hydrogen sulfide + 2 5'-deoxyadenosine + 2 L-methionine + 2 reduced [2Fe-2S]-[ferredoxin]. It participates in protein modification; protein lipoylation via endogenous pathway; protein N(6)-(lipoyl)lysine from octanoyl-[acyl-carrier-protein]: step 2/2. Its function is as follows. Catalyzes the radical-mediated insertion of two sulfur atoms into the C-6 and C-8 positions of the octanoyl moiety bound to the lipoyl domains of lipoate-dependent enzymes, thereby converting the octanoylated domains into lipoylated derivatives. The chain is Lipoyl synthase, mitochondrial from Oryza sativa subsp. japonica (Rice).